A 24-amino-acid chain; its full sequence is Brevinin-1Ba (24 aa).

Cysteines 18 and 24 form a disulfide.

As to expression, expressed by the skin glands.

The protein resides in the secreted. Its function is as follows. Antibacterial activity against Gram-positive bacterium S.aureus. The chain is Brevinin-1Ba from Lithobates berlandieri (Rio Grande leopard frog).